The primary structure comprises 477 residues: Acetolactate synthase small subunit 2, chloroplastic (477 aa).

A chloroplast-targeting transit peptide spans 1-53; sequence MAATTTATSLFSSRLHFQNQNQGYGFPAKTPNSLQVNQIIDGRKMRNATVLSA. ACT domains follow at residues 78 to 150 and 309 to 383; these read TISV…DLSK and TLSL…NITH. L-valine-binding residues include aspartate 85, isoleucine 89, isoleucine 90, asparagine 103, isoleucine 104, asparagine 316, valine 320, leucine 321, asparagine 334, and isoleucine 335.

The protein belongs to the acetolactate synthase small subunit family. As to quaternary structure, the acetolactate synthase complex contains 4 homodimers of the large catalytic subunits, and 1 homotetramer of the small regulatory subunits. As to expression, expressed in roots in the vascular tissuem in cells around the quiescent center, in floral organs at the tips of young siliques and in the joint region between the silique and the pedicel. Barely detectable in mature leaves or siliques.

The protein localises to the plastid. It is found in the chloroplast. It localises to the peroxisome. It functions in the pathway amino-acid biosynthesis; L-isoleucine biosynthesis; L-isoleucine from 2-oxobutanoate: step 1/4. The protein operates within amino-acid biosynthesis; L-valine biosynthesis; L-valine from pyruvate: step 1/4. Regulatory subunit of acetohydroxy-acid synthase. Involved in the feed-back inhibition by branched-chain amino acids but not in herbicide tolerance. May play a role in valine and isoleucine-mediated feedback inhibition in roots. In vitro, inhibited by valine, but not leucine or isoleucine. Required for reproductive development and sodium homeostasis. In Arabidopsis thaliana (Mouse-ear cress), this protein is Acetolactate synthase small subunit 2, chloroplastic.